A 312-amino-acid chain; its full sequence is Taste receptor type 2 member 9 (312 aa).

Residues 1–9 lie on the Extracellular side of the membrane; sequence MPSAIEAIY. Residues 10 to 32 traverse the membrane as a helical segment; the sequence is IILIAGELTIGIWGNGFIVLVNC. The Cytoplasmic segment spans residues 33-52; the sequence is IDWLKRRDISLIDIILISLA. The chain crosses the membrane as a helical span at residues 53 to 72; sequence ISRICLLCVISLDGFFMLLF. Residues 73–86 are Extracellular-facing; the sequence is PGTYGNSVLVSIVN. Residues 87-109 traverse the membrane as a helical segment; the sequence is VVWTFANNSSLWFTSCLSIFYLL. The Cytoplasmic portion of the chain corresponds to 110 to 128; the sequence is KIANISHPFFFWLKLKINK. The helical transmembrane segment at 129 to 146 threads the bilayer; it reads VMLAILLGSFLISLIISV. The Extracellular segment spans residues 147-180; sequence PKNDDMWYHLFKVSHEENITWKFKVSKIPGTFKQ. Residue N164 is glycosylated (N-linked (GlcNAc...) asparagine). Residues 181-203 traverse the membrane as a helical segment; that stretch reads LTLNLGVMVPFILCLISFFLLLF. The Cytoplasmic segment spans residues 204 to 234; the sequence is SLVRHTKQIRLHATGFRDPSTEAHMRAIKAV. A helical transmembrane segment spans residues 235–257; that stretch reads IIFLLLLIVYYPVFLVMTSSALI. Residues 258 to 261 lie on the Extracellular side of the membrane; that stretch reads PQGK. The helical transmembrane segment at 262–284 threads the bilayer; sequence LVLMIGDIVTVIFPSSHSFILIM. Over 285-312 the chain is Cytoplasmic; that stretch reads GNSKLREAFLKMLRFVKCFLRRRKPFVP.

This sequence belongs to the G-protein coupled receptor T2R family. As to expression, expressed in subsets of taste receptor cells of the tongue and palate epithelium and exclusively in gustducin-positive cells.

It is found in the membrane. Gustducin-coupled receptor implicated in the perception of bitter compounds in the oral cavity and the gastrointestinal tract. Signals through PLCB2 and the calcium-regulated cation channel TRPM5. The sequence is that of Taste receptor type 2 member 9 (TAS2R9) from Homo sapiens (Human).